Reading from the N-terminus, the 258-residue chain is Tryptophan synthase alpha chain (258 aa).

Residues E52 and D63 each act as proton acceptor in the active site.

It belongs to the TrpA family. In terms of assembly, tetramer of two alpha and two beta chains.

The catalysed reaction is (1S,2R)-1-C-(indol-3-yl)glycerol 3-phosphate + L-serine = D-glyceraldehyde 3-phosphate + L-tryptophan + H2O. It functions in the pathway amino-acid biosynthesis; L-tryptophan biosynthesis; L-tryptophan from chorismate: step 5/5. Its function is as follows. The alpha subunit is responsible for the aldol cleavage of indoleglycerol phosphate to indole and glyceraldehyde 3-phosphate. In Streptococcus pneumoniae (strain Taiwan19F-14), this protein is Tryptophan synthase alpha chain.